The sequence spans 431 residues: Glutamyl-tRNA reductase (431 aa).

Substrate-binding positions include 49–52, Ser109, 114–116, and Gln120; these read TCNR and EGQ. The active-site Nucleophile is the Cys50. 189 to 194 is a binding site for NADP(+); the sequence is GAGKMS.

Belongs to the glutamyl-tRNA reductase family. As to quaternary structure, homodimer.

The catalysed reaction is (S)-4-amino-5-oxopentanoate + tRNA(Glu) + NADP(+) = L-glutamyl-tRNA(Glu) + NADPH + H(+). It participates in porphyrin-containing compound metabolism; protoporphyrin-IX biosynthesis; 5-aminolevulinate from L-glutamyl-tRNA(Glu): step 1/2. Its pathway is porphyrin-containing compound metabolism; chlorophyll biosynthesis. Functionally, catalyzes the NADPH-dependent reduction of glutamyl-tRNA(Glu) to glutamate 1-semialdehyde (GSA). This is Glutamyl-tRNA reductase from Trichodesmium erythraeum (strain IMS101).